A 348-amino-acid polypeptide reads, in one-letter code: Phenylalanine--tRNA ligase alpha subunit (348 aa).

Position 259 (E259) interacts with Mg(2+).

It belongs to the class-II aminoacyl-tRNA synthetase family. Phe-tRNA synthetase alpha subunit type 1 subfamily. In terms of assembly, tetramer of two alpha and two beta subunits. It depends on Mg(2+) as a cofactor.

The protein resides in the cytoplasm. The enzyme catalyses tRNA(Phe) + L-phenylalanine + ATP = L-phenylalanyl-tRNA(Phe) + AMP + diphosphate + H(+). The polypeptide is Phenylalanine--tRNA ligase alpha subunit (Lactiplantibacillus plantarum (strain ATCC BAA-793 / NCIMB 8826 / WCFS1) (Lactobacillus plantarum)).